A 175-amino-acid polypeptide reads, in one-letter code: 3-hydroxyanthranilate 3,4-dioxygenase (175 aa).

Arg45 contributes to the O2 binding site. 3 residues coordinate Fe cation: His49, Glu55, and His93. Residue Glu55 coordinates substrate. Residues Arg97 and Glu107 each coordinate substrate. The a divalent metal cation site is built by Cys122, Cys125, Cys159, and Cys162.

This sequence belongs to the 3-HAO family. It depends on Fe(2+) as a cofactor.

The protein resides in the cytoplasm. It carries out the reaction 3-hydroxyanthranilate + O2 = (2Z,4Z)-2-amino-3-carboxymuconate 6-semialdehyde. It participates in cofactor biosynthesis; NAD(+) biosynthesis; quinolinate from L-kynurenine: step 3/3. Functionally, catalyzes the oxidative ring opening of 3-hydroxyanthranilate to 2-amino-3-carboxymuconate semialdehyde, which spontaneously cyclizes to quinolinate. This Lodderomyces elongisporus (strain ATCC 11503 / CBS 2605 / JCM 1781 / NBRC 1676 / NRRL YB-4239) (Yeast) protein is 3-hydroxyanthranilate 3,4-dioxygenase.